Here is a 153-residue protein sequence, read N- to C-terminus: Peptide methionine sulfoxide reductase B6 (153 aa).

Residues 28 to 149 (NEEWRTVLSP…NSVALKFSSA (122 aa)) form the MsrB domain. Positions 67, 70, 113, and 116 each coordinate Zn(2+). Cys-85 and Cys-138 are oxidised to a cystine. Cys-138 acts as the Nucleophile in catalysis.

It belongs to the MsrB Met sulfoxide reductase family. The cofactor is Zn(2+).

Its subcellular location is the cytoplasm. The protein localises to the cytosol. The enzyme catalyses L-methionyl-[protein] + [thioredoxin]-disulfide + H2O = L-methionyl-(R)-S-oxide-[protein] + [thioredoxin]-dithiol. Functionally, catalyzes the reduction of methionine sulfoxide (MetSO) to methionine in proteins. Plays a protective role against oxidative stress by restoring activity to proteins that have been inactivated by methionine oxidation. MSRB family specifically reduces the MetSO R-enantiomer. The chain is Peptide methionine sulfoxide reductase B6 (MSRB6) from Arabidopsis thaliana (Mouse-ear cress).